A 436-amino-acid polypeptide reads, in one-letter code: Aminotransferase tdiD (436 aa).

Residues R30, Y86, Y148, and N202 each coordinate substrate. K270 bears the N6-(pyridoxal phosphate)lysine mark. R407 lines the substrate pocket.

It belongs to the class-I pyridoxal-phosphate-dependent aminotransferase family. Pyridoxal 5'-phosphate is required as a cofactor.

The enzyme catalyses 3-phenylpyruvate + L-tryptophan = indole-3-pyruvate + L-phenylalanine. Its pathway is secondary metabolite biosynthesis. Aminotransferase; part of the gene cluster that mediates the biosynthesis of terrequinone A, an antitumor agent. The first step in the biosynthetic pathway for terrequinone A is formation of indole pyruvic acid (IPA) from L-tryptophan by the aminotransferase tdiD. The nonribosomal peptide synthase tdiA then immediately converts unstable IPA to didemethylasterriquinone D (DDAQ D), via condensation of 2 IPA molecules. The symmetric connectivity of the 2 IPA molecules is thought to arise by head-to-tail dual Claisen condensations facilitated by the TE domain. TdiB then catalyzes reverse prenylation by transferring dimethylallyl diphosphate to carbon atom 2' of DDAQ D, to yield asterriquinone C-1. Finally, tdiC and tdiE enzymes robustly convert asterriquinone C-1 to terrequinone A via a transformation involving regular prenylation at carbon atom 5, which requires elimination of the hydroxy group on C-5. In Emericella nidulans (strain FGSC A4 / ATCC 38163 / CBS 112.46 / NRRL 194 / M139) (Aspergillus nidulans), this protein is Aminotransferase tdiD.